The following is a 234-amino-acid chain: Carboxymethylenebutenolidase 1 (234 aa).

Catalysis depends on residues cysteine 123, aspartate 171, and histidine 201.

This sequence belongs to the dienelactone hydrolase family. Monomer.

The enzyme catalyses 2-(5-oxo-2,5-dihydrofuran-2-ylidene)acetate + H2O = 4-oxohex-2-enedioate + H(+). Its pathway is aromatic compound metabolism; 3-chlorocatechol degradation. Its function is as follows. Ring cleavage of cyclic ester dienelactone to produce maleylacetate. This Cupriavidus pinatubonensis (strain JMP 134 / LMG 1197) (Cupriavidus necator (strain JMP 134)) protein is Carboxymethylenebutenolidase 1 (tfdEI).